The sequence spans 221 residues: SIN3-HDAC complex-associated factor (221 aa).

A compositionally biased stretch (basic and acidic residues) spans 112-121 (QKEFKRHNSD). 2 disordered regions span residues 112–152 (QKEF…MASG) and 201–221 (AAAE…TQEW). Positions 124 to 135 (STTSSASPAQSP) are enriched in low complexity. A compositionally biased stretch (polar residues) spans 136 to 152 (CYSNQSDDGSDTEMASG).

This sequence belongs to the SINHCAF family. Interacts with the Sin3/HDAC corepressor complex at least composed of BRMS1, BRMS1L, ING2, SAP30, SAP30L and HDAC1. Found in a complex composed of at least SINHCAF, SIN3A, HDAC1, SAP30, RBBP4, OGT and TET1. Interacts with SIN3A and OGT.

The protein localises to the nucleus. In terms of biological role, subunit of the Sin3 deacetylase complex (Sin3/HDAC), this subunit is important for the repression of genes encoding components of the TGF-beta signaling pathway. Core component of a SIN3A complex (composed of at least SINHCAF, SIN3A, HDAC1, SAP30, RBBP4, OGT and TET1) present in embryonic stem (ES) cells. Promotes the stability of SIN3A and its presence on chromatin and is essential for maintaining the potential of ES cells to proliferate rapidly, while ensuring a short G1-phase of the cell cycle, thereby preventing premature lineage priming. This is SIN3-HDAC complex-associated factor from Homo sapiens (Human).